The primary structure comprises 188 residues: MKANDIKKGNVVEYNGGIYQIRDIERSSPQGRGGNVRFRFIMYSVPGGVKTDASFDADDNLPEVELLRRQSTFSYKDGEAFVFMDDEDFTPYTLDADVIGTDAGYITDGLTGIYVQVIDDQPVAVQLPQTVTLEVVETPPELKGGTATKRPKPAKLNTGMEIMVPEYITNGERVLVNTTTGEFAGRAD.

It belongs to the elongation factor P family.

In Xanthomonas euvesicatoria pv. vesicatoria (strain 85-10) (Xanthomonas campestris pv. vesicatoria), this protein is Elongation factor P-like protein.